A 156-amino-acid polypeptide reads, in one-letter code: Ecotin (156 aa).

An N-terminal signal peptide occupies residues 1–19 (MKALLIAAGVAALSSTAMA). A disulfide bridge connects residues C65 and C102.

It belongs to the protease inhibitor I11 (ecotin) family. In terms of assembly, homodimer.

Its subcellular location is the periplasm. General inhibitor of family S1 serine proteases. In Pseudomonas aeruginosa (strain LESB58), this protein is Ecotin.